A 359-amino-acid chain; its full sequence is Peptide chain release factor 1 (359 aa).

Q236 is modified (N5-methylglutamine).

This sequence belongs to the prokaryotic/mitochondrial release factor family. In terms of processing, methylated by PrmC. Methylation increases the termination efficiency of RF1.

The protein localises to the cytoplasm. Peptide chain release factor 1 directs the termination of translation in response to the peptide chain termination codons UAG and UAA. The chain is Peptide chain release factor 1 from Streptococcus mutans serotype c (strain ATCC 700610 / UA159).